The primary structure comprises 818 residues: MYRPNFYESTCLRCSETVYQVDRVGPLKDFTFFHSGCFKCVHCGTKLTLKTYFNNQHKQDDKEVYCSSHVPKSGPGHLDQTSVGIRQALNAPRTNKFVNEQIRGTRSEVDGGPLGGSRQSTPNGYGSREISSPSQNDSDYKYGRFDASALHIAHALKQTEIQKAYNKAREKPIDFYLAREEQAHLEMKHRKEEDDLYRKFASKRAEEDRKIQDEFQDEWERELQRLTHKFEKELATSRRSRDEANILTMRHEQQKEDLEKNMTLRRSKKKESITRKMLEHERYETAALVDRQSSEMLELISARRSEYMQSESIFLDDEFSEGAVPVEYPLNAPIPAPPAVSKFQIYTDPIEFEDVDRIAISVAQEDQKTFTDLVRQLVGRCTTDIEKARTIFRWITVKNLNAMHFDDDLRGDTPMGLLRGIKYGTESYHVLFKRLCSYAGLHCVVIKGYSKSAGYQPGVKFQDSRFRNSWNAVYVAGAWRFVQCNWGARHLVNAKEAPKQGRGKNDSLRYEYDDHYFLTDPREFIYEFYPLQEEWQLLKRPITLREFENLPFVRSLFFRYGLHFADEGYGAVVFTDDTGAATVRIAMPTDMQSCLIFHYNLKFYDSDEELSYDGVSLKRFVMQSVIGNIVAFRVHAPCSGAFLLDIFANAVTPQEYLTGEPMKFKSVCKFKICCEELQTVMVPLPDCASGEWGPTKATRLFGLIPITHQDPLIFAGRSLDLQFRMSRPLTDFMATLHKNGIEEKKLAKYVTHSTLDDIVTFIINFPEEGQYGLDIYTRELGGPQHHHHHNNNNSSSSSGEKHLLTHCCKYLINSSKRN.

In terms of domain architecture, LIM zinc-binding spans 9-76 (STCLRCSETV…SSHVPKSGPG (68 aa)). The interval 97–141 (FVNEQIRGTRSEVDGGPLGGSRQSTPNGYGSREISSPSQNDSDYK) is disordered. Over residues 117–137 (SRQSTPNGYGSREISSPSQND) the composition is skewed to polar residues. Positions 216-272 (QDEWERELQRLTHKFEKELATSRRSRDEANILTMRHEQQKEDLEKNMTLRRSKKKES) form a coiled coil.

It belongs to the transglutaminase-like superfamily. In terms of assembly, interacts with pnut. In terms of tissue distribution, localizes to the neuropil of the embryonic central nervous system (at protein level). Also detected in third instar larval brain (at protein level).

Its subcellular location is the cytoplasm. It is found in the cell cortex. The protein resides in the cleavage furrow. In terms of biological role, may act as a modulator of septin function during cytokinesis in the developing nervous system. The protein is Hillarin of Drosophila melanogaster (Fruit fly).